Here is a 77-residue protein sequence, read N- to C-terminus: Putative neurotoxin 1 (77 aa).

Positions 1-25 (MKAFIAILSIAIVLLLIVSIKETSA) are cleaved as a signal peptide. Positions 26 to 46 (KDCKQECVKRYTKGDLTNFLK) are excised as a propeptide.

The protein belongs to the scolopendra neurotoxin 3 family. Post-translationally, contains 2 disulfide bonds. As to expression, expressed by the venom gland.

Its subcellular location is the secreted. The chain is Putative neurotoxin 1 from Scolopendra mutilans (Chinese red-headed centipede).